The primary structure comprises 345 residues: 3-isopropylmalate dehydrogenase (345 aa).

R94, R104, R132, and D216 together coordinate substrate. Residues D216, D240, and D244 each contribute to the Mg(2+) site. 274-286 (GSAPDIAGQGIAN) is a binding site for NAD(+).

This sequence belongs to the isocitrate and isopropylmalate dehydrogenases family. LeuB type 1 subfamily. Homodimer. Requires Mg(2+) as cofactor. Mn(2+) serves as cofactor.

It is found in the cytoplasm. The catalysed reaction is (2R,3S)-3-isopropylmalate + NAD(+) = 4-methyl-2-oxopentanoate + CO2 + NADH. The protein operates within amino-acid biosynthesis; L-leucine biosynthesis; L-leucine from 3-methyl-2-oxobutanoate: step 3/4. In terms of biological role, catalyzes the oxidation of 3-carboxy-2-hydroxy-4-methylpentanoate (3-isopropylmalate) to 3-carboxy-4-methyl-2-oxopentanoate. The product decarboxylates to 4-methyl-2 oxopentanoate. The sequence is that of 3-isopropylmalate dehydrogenase from Streptococcus pneumoniae (strain ATCC BAA-255 / R6).